A 200-amino-acid polypeptide reads, in one-letter code: UPF0329 protein ECU06_1670 (200 aa).

The protein belongs to the UPF0329 family.

The protein is UPF0329 protein ECU06_1670 of Encephalitozoon cuniculi (strain GB-M1) (Microsporidian parasite).